An 824-amino-acid polypeptide reads, in one-letter code: MRLSKVSDIKSTGVSNYKNFNSKNSSKYSLMEVSKKNEKKNSLGAFHSKKILLIFGIIYVVLLNAYICGDKYEKAVDYGFRESRILAEGEDTCARKEKTTLRKSKQKTSTRTVATQTKKDEENKSVVTEEQKVESDSEKQKRTKKVVKKQINIGDTENQKEGKNVKKVIKKEKKKEESGKPEENKHANEASKKQEPKASKVSQKPSTSTRSNNEVKIRAASNQETLTSADPEGQIMREYAADPEYRKHLEIFYKILTNTDPNDEVERRNADNKEDLTSADPEGQIMREYASDPEYRKHLEIFYKILTNTDPNDDVERRNADNKEDLTSADPEGQIMREYAADPEYRKHLEVFHKILTNTDPNDEVERRNADNKEDLTSADPEGQIMREYAADPEYRKHLEVFHKILTNTDPNDEVERRNADNKELTSSDPEGQIMREYAADPEYRKHLEVFHKILTNTDPNDEVERRNADNKEDLTSADPEGQIMREYAADPEYRKHLEVFHKILTNTDPNDEVERRNADNKEDLTSADPEGQIMREYAADPEYRKHLEIFHKILTNTDPNDEVERRNADNKEDLTSADPEGQIMREYAADPEYRKHLEIFYKILTNTDPNDEVERRNADNKEELTSSDPEGQIMREYAADPEYRKHLEIFHKILTNTDPNDEVERRNADNKEDLTSADPEGQIMREYAADPEYRKHLEIFYKILTNTDPNDEVERRNADNKEDLTSADPEGQIMREYASDPEYRKHLEIFYKILTNTDPNDDVERRNADNKEDLTSADPEGQIMREYAADPEYRKHLEVFHKILTNTDPNDEVERQNADNNEA.

Residues 84 to 88 carry the PEXEL motif motif; sequence RILAE. 11 disordered regions span residues 97–236, 258–291, 310–334, 358–384, 408–431, 457–482, 507–532, 559–582, 659–683, 711–733, and 759–783; these read EKTT…GQIM, NTDPNDEVERRNADNKEDLTSADPEGQIMREYAS, DPNDDVERRNADNKEDLTSADPEGQ, NTDPNDEVERRNADNKEDLTSADPEGQ, NTDPNDEVERRNADNKELTSSDPE, NTDPNDEVERRNADNKEDLTSADPEG, DPNDEVERRNADNKEDLTSADPEG, DPNDEVERRNADNKEDLTSADPEGQ, and NDEVERRNADNKEDLTSADPEGQ. Basic and acidic residues-rich tracts occupy residues 117-140 and 174-198; these read TKKDEENKSVVTEEQKVESDSEKQ and KKEESGKPEENKHANEASKKQEPKA. The span at 200–228 shows a compositional bias: polar residues; the sequence is KVSQKPSTSTRSNNEVKIRAASNQETLTS. 12 GBP repeats span residues 226-275, 276-325, 326-375, 376-424, 425-474, 475-524, 525-574, 575-624, 625-674, 675-724, 725-774, and 775-824; these read LTSA…NKED, LTSA…DNKE, LTSS…NKED, LTSA…NKEE, and LTSA…NNEA. Basic and acidic residues-rich tracts occupy residues 264–276, 314–326, 364–376, 414–426, 463–475, 513–525, 563–575, 663–675, 713–725, and 763–775; these read EVERRNADNKEDL, DVERRNADNKEDL, and EVERRNADNKELT.

As to quaternary structure, interacts with host glycophorin.

The protein resides in the secreted. It localises to the cell surface. The protein localises to the host cytoplasm. Functionally, involved in merozoite invasion of host erythrocytes. The polypeptide is Glycophorin-binding protein 130 (Plasmodium falciparum (isolate 3D7)).